The sequence spans 47 residues: Large ribosomal subunit protein bL34 (47 aa).

It belongs to the bacterial ribosomal protein bL34 family.

This is Large ribosomal subunit protein bL34 from Mycobacteroides abscessus (strain ATCC 19977 / DSM 44196 / CCUG 20993 / CIP 104536 / JCM 13569 / NCTC 13031 / TMC 1543 / L948) (Mycobacterium abscessus).